Here is a 141-residue protein sequence, read N- to C-terminus: Large ribosomal subunit protein uL11 (141 aa).

The protein belongs to the universal ribosomal protein uL11 family. Part of the ribosomal stalk of the 50S ribosomal subunit. Interacts with L10 and the large rRNA to form the base of the stalk. L10 forms an elongated spine to which L12 dimers bind in a sequential fashion forming a multimeric L10(L12)X complex. In terms of processing, one or more lysine residues are methylated.

Forms part of the ribosomal stalk which helps the ribosome interact with GTP-bound translation factors. This is Large ribosomal subunit protein uL11 from Clostridium kluyveri (strain ATCC 8527 / DSM 555 / NBRC 12016 / NCIMB 10680 / K1).